The primary structure comprises 1687 residues: MRRPPPLGPTTASGPEGNVRNLRKRQAPGPGAAGGCGPEAGGRGENRQKRRMVARATPGRGEVKSDKSVAASGAGKAARRRVEGRRGQVSPSDRRGLEAAKEAEFPLQTERHTKEKRKVTEASSDDPQPGFDLVRKESLTSSESFQTVECLRSLGKEGIVEGIKRRIRNKKLKSLENPPLKITENEATQNIKVEFQDELYKNTLKYSCNILSPEVENNFVFKLRDCNCFPHSKDCNDENNLPYEPDGGCMHVAENFSKKENFRSLAEKSDTNNIPQLLQTEENVMGVNKLLPEESDLYQSKINGLLPCLQREKNKYSIEESSVGRKPRKRMKLSEKADETVTQMNFSNEYNKSELMLQENQMIADGKEAEAKSPLNVLRKVSHNTVSLMDHLLSVPEMVEKETSSEHHVNAVFQKTIEPLLKEETENASEPLGYENMALKEDFKSKSCIGKSPEYHIERRSSREDLRSDSEELKLSCQRTIPMTGKRTWPYYSCARISAWCWKKASLPESSYFLPGSQKSCKKVDVPKHQTNKTHLTDSKLLLQSSLTETNTESSSKEKLDSNLNCLFSVSAVEHTLMVIKEPIIKDDKKIKSEELSRSGSEVISNTTEDTQLTSDTQSLTGNKKRDRGNLTKLNLTAASKDGQEANNSTGKTIHRKACVAKQTFVVPDLVKILNTGRLTNFKIPLLKNKTKKRKEVNAKSSEREGYSPLELLDNLSGADTRQNRSKENVSMTMLGPQTLSIQNSVTPVQASSDSFYNKNSCSISPSFTKHGNSSKPSNHFSEPGNIVSNKEVASLTVENNAFSCDPGYVEKSPSFCCNKQETFRPVSSEVRGRKITKNFSEVGFPDILKAYEDDVLLIDVIQDDPDLFGVSNEGELSFTSEVPRISQEPNVPGEHQSTDSKYVETPVKKEPSDDLRELPVLDCGPIKPDICASNSAASEIKHDPKDANTSLGEVANETSENETLGDFSEQIKGSDLDEKHRFTDKVITKEEKENIYEVRKSKDSRNADIMVGECQFAAPVPKPLCLLVPPLNLSGHQEDTILNTWMNDFRFLGKHSVLKLQNPETCEIFKREKNVGVFQKSLGLMIPYKYCKFHFNTLRGCERPLCKFAHVPEQGDEKVCMDVFKKYININELCLLQRAVNVFMEYYRKFPPGIYFDLQVLNDLLNSLLKHCLLKEVFQIVNLSIMVKMLPSLKILLNIFEHVATMKLRNAVPALIDIFCKLVEAGMVLDPEHFNYIVKLLYQVQASKQEITAVLEMKSRLQMRQFKKNWKCDLDSALNKLEHCKEKGDWTKLGKLYINVKMGCEKFADFQTFCACIAETLTKNCEDERPDTPFCEFAETVSKDPQNSKVDKGVLGRIGISAMYFYHKLLQWSKGRKVLDKLYELKIHFASLKGLIGPEKLASRCQIVNVAAEIFLKSGSLDGALWVMRESEWIIDTPLWPCDRLDVLNRHNLLCTIAHETLAKSLYRQTFEVLQNLPGFQNSQETVEVSQYSLLFNKLLGSCIESNSLGMSSSVAEFMISKSIPIDFSFLRRLITSLGRSRLWLKARAHYKSALSLGCYPPLEGNLYRKLLLIPSYLSEIEMLLAIEIFMVSNASSIQSPGTSTQILQIVLKRCEDNQSRSNDDYQAAVERLIMAARISDPKLFVKHMTVNVNKEQVYSLEHCSALKWLKENMKWAGKVWLFSNH.

Disordered stretches follow at residues 1-131 (MRRP…QPGF), 319-339 (EESS…KADE), 596-632 (LSRS…GNLT), and 880-916 (TSEV…SDDL). Residues 31-41 (GAAGGCGPEAG) show a composition bias toward gly residues. The span at 80–113 (RRVEGRRGQVSPSDRRGLEAAKEAEFPLQTERHT) shows a compositional bias: basic and acidic residues. The segment covering 598–622 (RSGSEVISNTTEDTQLTSDTQSLTG) has biased composition (polar residues). Residues 897-916 (QSTDSKYVETPVKKEPSDDL) show a composition bias toward basic and acidic residues.

It is found in the cytoplasm. It localises to the cytosol. Its function is as follows. Important for normal spermatogenesis and male fertility. Specifically required for progression to the post-meiotic stages of spermatocyte development. Seems to be necessary for normal expression levels of a number of testis-expressed gene transcripts, although its role in this process is unclear. The chain is Protein TOPAZ1 (TOPAZ1) from Macaca fascicularis (Crab-eating macaque).